The sequence spans 88 residues: Early E1B 9 kDa protein (88 aa).

A disordered region spans residues 23–88 (NMEGSQDEDN…DLFPELRRLP (66 aa)). Residues 34–44 (RLLASAASGSS) show a composition bias toward low complexity.

The protein is Early E1B 9 kDa protein of Homo sapiens (Human).